The sequence spans 159 residues: 4-deoxy-4-sulfo-D-erythrose isomerase (159 aa).

The Proton acceptor role is filled by Cys-66.

It belongs to the LacAB/RpiB family.

The catalysed reaction is 4-deoxy-4-sulfo-D-erythrose = 4-deoxy-4-sulfo-D-erythrulose. Part of the sulfo-TK pathway, a D-sulfoquinovose degradation pathway that produces 2-hydroxyethane-1-sulfonate (isethionate). Catalyzes the isomerization of 4-deoxy-4-sulfo-D-erythrose (SE) to 4-deoxy-4-sulfo-D-erythrulose (SEu). This is 4-deoxy-4-sulfo-D-erythrose isomerase from Clostridium sp. (strain MSTE9).